The primary structure comprises 117 residues: Photosystem II reaction center Psb28 protein (117 aa).

This sequence belongs to the Psb28 family. As to quaternary structure, part of the photosystem II complex.

The protein resides in the cellular thylakoid membrane. The protein is Photosystem II reaction center Psb28 protein of Prochlorococcus marinus (strain MIT 9211).